The primary structure comprises 1196 residues: MAGHDVKYGKHRTRRSFSRIKEVIGLPNLIEVQTLSYKNFLDEGLANVFKEMFPIDNFAGTMELEFVGYEMKTPKYTVEEARAHDANYSAPIYVTFRLVNKETGELKTQEVFFGDFPLMTEMGTFINNGSERLIVSQLVRSPGSYFHLKTDKNGLESFGHTTIPNRGAWFELDTDAKGIGYVRIDRTRKLTFTTMLRALGFGSDDEILELLGETQLLTDTIAKDVHKNPADTRVEEALKDIYDRLRPGEPKTADSSRGLLVARFFDPKRYDFAPVGRYKFNKKLALKNRLLGLTLAEPIVDPETGEILVNTDTLVTRDVLDLIEPLLDNGLGNFVVEPSDDAVIPEPITLQSIKVYSPKDSERVVTLLSNGNPDSECRVLTPADVISNISYWLGLAEGIGKVDDIDHLGNRRIRSVGELLQNQVRIGLSRMERVIRERMSSSENENITPQGLINIRPVTASIKEFFGSSQLSQFMDQHNPLSELSHKRRFSALGPGGISRDRASYEVRDVHYTHYGRMCPIETPEGPNIGLINNLSSYAKVNEYGFIMSPYRRVDRVNGIVTDEVEYLTADEEDNYTVAQANSPLTDDSRFANETVMARHTGNNIEVEASTADYMDVSPKQVIAVAAACIPFLENDDSNRALMGANMQRQAVPLIDPHAPWIGTGMEHQTARDSGAALLAKHAGVVEYVDGNEIRVRRTSGELDIYNITKYRRSNSGTSYNQRPLARLGEKVEKNDIIADGPSMENGEMALGQNPLVAYMTWEGYNFEDAVIMSERLIKDDVYTSIAIEEYESETRDTKLGPEEITREIPNVGDEALKNLDESGIIRIGAEVKDGDLLVGKVTPKGETDPTPEERLLRAIFGEKAREVRDTSLRVPHGGGGIVHDVRVFTRENGDELPSGVNKLVRVFIAQKRKIHVGDKMAGRHGNKGVVSNIVPVEDMPYLPDGTPIDIMLNPLGVPSRMNIGQVMELHLGMAARTLGIHIATPVFDGASDEDIWDTVKEAGMAADAKTVLYDGRTGEPFDNRISVGVMYMIKLHHMVDDKLHARSVGPYSLVTQQPLGGKAQFGGQRFGEMEVWALEAYGAANVLQEILTYKSDDVIGRTRAYEAIVKGERIPKPGLPESFRVLVKELQSLGLDMKVLDADRNVLDLRELDEDEVMTRPDNTEITPEMLEAQEAIVAQAEAEEEALINADIEK.

It belongs to the RNA polymerase beta chain family. As to quaternary structure, the RNAP catalytic core consists of 2 alpha, 1 beta, 1 beta' and 1 omega subunit. When a sigma factor is associated with the core the holoenzyme is formed, which can initiate transcription.

The enzyme catalyses RNA(n) + a ribonucleoside 5'-triphosphate = RNA(n+1) + diphosphate. Its function is as follows. DNA-dependent RNA polymerase catalyzes the transcription of DNA into RNA using the four ribonucleoside triphosphates as substrates. The polypeptide is DNA-directed RNA polymerase subunit beta (Lactococcus lactis subsp. cremoris (strain MG1363)).